The sequence spans 450 residues: tRNA-2-methylthio-N(6)-dimethylallyladenosine synthase (450 aa).

An MTTase N-terminal domain is found at 2–119 (KKVFVKTYGC…LPDLIARRQR (118 aa)). Positions 11, 48, 82, 156, 160, and 163 each coordinate [4Fe-4S] cluster. The 234-residue stretch at 142 to 375 (RVEGPSAFVS…QATIEENVQR (234 aa)) folds into the Radical SAM core domain. The 71-residue stretch at 378–448 (QGMVGTVQRI…PHSLRGEIVV (71 aa)) folds into the TRAM domain.

This sequence belongs to the methylthiotransferase family. MiaB subfamily. Monomer. [4Fe-4S] cluster is required as a cofactor.

The protein localises to the cytoplasm. The enzyme catalyses N(6)-dimethylallyladenosine(37) in tRNA + (sulfur carrier)-SH + AH2 + 2 S-adenosyl-L-methionine = 2-methylsulfanyl-N(6)-dimethylallyladenosine(37) in tRNA + (sulfur carrier)-H + 5'-deoxyadenosine + L-methionine + A + S-adenosyl-L-homocysteine + 2 H(+). Its function is as follows. Catalyzes the methylthiolation of N6-(dimethylallyl)adenosine (i(6)A), leading to the formation of 2-methylthio-N6-(dimethylallyl)adenosine (ms(2)i(6)A) at position 37 in tRNAs that read codons beginning with uridine. The sequence is that of tRNA-2-methylthio-N(6)-dimethylallyladenosine synthase from Cupriavidus taiwanensis (strain DSM 17343 / BCRC 17206 / CCUG 44338 / CIP 107171 / LMG 19424 / R1) (Ralstonia taiwanensis (strain LMG 19424)).